The chain runs to 343 residues: Flavonoid 4'-O-methyltransferase 4 (343 aa).

Aspartate 211 is an S-adenosyl-L-methionine binding site. Histidine 249 functions as the Proton acceptor in the catalytic mechanism.

It belongs to the class I-like SAM-binding methyltransferase superfamily. Cation-independent O-methyltransferase family. In terms of assembly, homodimer.

It catalyses the reaction apigenin + S-adenosyl-L-methionine = acacetin + S-adenosyl-L-homocysteine + H(+). The catalysed reaction is kaempferol + S-adenosyl-L-methionine = kaempferide + S-adenosyl-L-homocysteine + H(+). The enzyme catalyses isorhamnetin + S-adenosyl-L-methionine = 3',4'-O-dimethylquercetin + S-adenosyl-L-homocysteine + 2 H(+). It carries out the reaction scutellarein + S-adenosyl-L-methionine = scutellarein 4'-methyl ether + S-adenosyl-L-homocysteine + H(+). It catalyses the reaction (2S)-naringenin + S-adenosyl-L-methionine = (2S)-naringenin 4'-methyl ether + S-adenosyl-L-homocysteine + H(+). The catalysed reaction is 4',7,8-trihydroxyflavone + S-adenosyl-L-methionine = 7,8-dihydroxy-4'-methoxyflavone + S-adenosyl-L-homocysteine + H(+). The enzyme catalyses taxifolin + S-adenosyl-L-methionine = taxifolin 4'-methyl ether + S-adenosyl-L-homocysteine + H(+). It functions in the pathway flavonoid metabolism. In terms of biological role, flavonoid 4'-O-methyltransferase involved in the biosynthesis of polymethoxylated flavonoids natural products such as pebrellin, aroma compounds which contribute to the flavor of peppermint, and exhibit pharmacological activities such as anti-allergic, anti-oxidant, antibacterial, anti-proliferative, and anti-inflammatory effects. Catalyzes S-adenosylmethionine-dependent regioselective 4'-O-methylation of flavonoids; active on various hydroxylated flavonoid substrates, including isorhamnetin, kaempferol, apigenin (API), scutellarein (6-hydroxy-apigenin, 6-OH-API, SCU), taxifolin, 7,8,4'-trihydroxy-flavone and naringenin (NAR), and, with a lower efficiency, quercetin, rhamnetin, luteolin (LUT) and 7,8,3',4'-tetrahydroxy-flavone. This Mentha piperita (Peppermint) protein is Flavonoid 4'-O-methyltransferase 4.